The primary structure comprises 355 residues: Erythronate-4-phosphate dehydrogenase (355 aa).

2 residues coordinate substrate: Ser-45 and Thr-66. Asp-146 contacts NAD(+). The active site involves Arg-206. Asp-229 lines the NAD(+) pocket. Residue Glu-234 is part of the active site. The Proton donor role is filled by His-251. NAD(+) is bound at residue Gly-254. Tyr-255 serves as a coordination point for substrate.

The protein belongs to the D-isomer specific 2-hydroxyacid dehydrogenase family. PdxB subfamily. As to quaternary structure, homodimer.

It localises to the cytoplasm. The enzyme catalyses 4-phospho-D-erythronate + NAD(+) = (R)-3-hydroxy-2-oxo-4-phosphooxybutanoate + NADH + H(+). It functions in the pathway cofactor biosynthesis; pyridoxine 5'-phosphate biosynthesis; pyridoxine 5'-phosphate from D-erythrose 4-phosphate: step 2/5. Functionally, catalyzes the oxidation of erythronate-4-phosphate to 3-hydroxy-2-oxo-4-phosphonooxybutanoate. This Acinetobacter baumannii (strain SDF) protein is Erythronate-4-phosphate dehydrogenase.